Reading from the N-terminus, the 347-residue chain is Beta carbonic anhydrase 1, chloroplastic (347 aa).

Residues 1 to 113 (MSTAPLSGFF…AAAKVEQITA (113 aa)) constitute a chloroplast transit peptide. An N-acetylalanine modification is found at Ala-114. Position 175 is a phosphoserine (Ser-175). Phosphotyrosine is present on Tyr-203. Position 266 is a phosphoserine (Ser-266). At Cys-280 the chain carries S-nitrosocysteine.

Belongs to the beta-class carbonic anhydrase family. In terms of assembly, homohexamer. S-nitrosylation at Cys-280 is up-regulated during nitrosative burst and suppresses both binding of salicylic acid and carbonic anhydrase activity. S-nitrosylated in response to an avirulent but not to a virulent bacterial strain. In terms of tissue distribution, strongly expressed in aerial tissues including leaves, stems, flowers and siliques. Accumulates in both guard cells and mesophyll cells.

It localises to the plastid. The protein localises to the chloroplast stroma. It is found in the cell membrane. It catalyses the reaction hydrogencarbonate + H(+) = CO2 + H2O. In terms of biological role, reversible hydration of carbon dioxide. Required for photosynthesis in cotyledons. Binds salicylic acid. Together with BCA4, involved in the CO(2) signaling pathway which controls gas-exchange between plants and the atmosphere by modulating stomatal development and movements. Promotes water use efficiency. This is Beta carbonic anhydrase 1, chloroplastic from Arabidopsis thaliana (Mouse-ear cress).